The sequence spans 290 residues: MLDKVKREVFFVARLLVVLYLSTLLLISYENVNYIAVGILSVYFLINVYVYFFSKPRILQLISPFLDIILVPAFVFFSKILYSIYALGVLISVYAWRKPVLAGIILLETYGLAFFYFSGHYLLMISHFILFLALFFTSYNFEYATVVGKERKRILKLKKNYHKLLKEFSNFEREKRMFSNLRKILKLLRESKEPKDYFEGLKREFNVKRISVIPVNEVEGEEVFDYDKGTLSVFVKLDRGYAKVVYELDPPFRLRDPVLIQALVEGAKLLSLYVEGFEESAEGKQVLVVG.

5 helical membrane passes run 10-27, 32-54, 69-91, 100-117, and 121-143; these read FFVA…LLLI, VNYI…YFFS, ILVP…GVLI, VLAG…FFYF, and YLLM…NFEY. Positions 147–183 form a coiled coil; sequence VGKERKRILKLKKNYHKLLKEFSNFEREKRMFSNLRK.

It is found in the cell membrane. This is an uncharacterized protein from Aquifex aeolicus (strain VF5).